A 1472-amino-acid polypeptide reads, in one-letter code: ABC multidrug transporter atrI (1472 aa).

The disordered stretch occupies residues 1–28; sequence MRRSNVVPVHSLTSSTNTGRDSRGEKYD. Residues 134 to 384 enclose the ABC transporter 1 domain; sequence FRRETWNFRN…FERQGWFCPP (251 aa). N143, N277, N308, and N332 each carry an N-linked (GlcNAc...) asparagine glycan. The next 7 helical transmembrane spans lie at 506–526, 530–550, 580–600, 605–625, 639–659, 664–684, and 744–764; these read ILALIVGSVFYGTPTATAGFY, ATLFYAVLLNALTAMTEINSL, IPVKFLMAIAFNIILYFLSGL, SQFFIYFLITFIIMFVMSAVF, MTLAGVLILMLVIYTGFVVPV, PWFKWIHYLNPIFYAFEILIA, and FGILIAFLIGFMVIYFVATEL. Basic and acidic residues predominate over residues 784–793; it reads AHLKNGHEPG. Positions 784 to 821 are disordered; that stretch reads AHLKNGHEPGADEEAGAGKTVVSSSAEENKQDQGITSI. Polar residues predominate over residues 804–821; that stretch reads VVSSSAEENKQDQGITSI. An ABC transporter 2 domain is found at 828-1070; sequence FTWRDVVYDI…TLLKYFESHG (243 aa). Position 864–871 (864–871) interacts with ATP; the sequence is GVSGAGKT. The next 6 helical transmembrane spans lie at 1168 to 1188, 1204 to 1224, 1244 to 1264, 1282 to 1302, 1309 to 1329, and 1337 to 1357; these read YIAAKMMLGICAGLFIGFSFF, VFMLCAIFSSLVQQIIPLFIT, FMIANIIVEIPYQILMGILVF, LVLLFCIQFFIYASTFADFVI, ETAGAIVTLQFSMALTFNGVM, and GFWIFMYRVSPFTYWVGGMAA. N1402 is a glycosylation site (N-linked (GlcNAc...) asparagine). Residues 1433 to 1453 form a helical membrane-spanning segment; it reads FGIFWAYVVFDIAVAVMLYYC. An N-linked (GlcNAc...) asparagine glycan is attached at N1460.

This sequence belongs to the ABC transporter superfamily. ABCG family. PDR (TC 3.A.1.205) subfamily.

It localises to the cell membrane. It catalyses the reaction itraconazole(in) + ATP + H2O = itraconazole(out) + ADP + phosphate + H(+). It carries out the reaction voriconazole(in) + ATP + H2O = voriconazole(out) + ADP + phosphate + H(+). The enzyme catalyses fluconazole(in) + ATP + H2O = fluconazole(out) + ADP + phosphate + H(+). Its function is as follows. Pleiotropic ABC efflux transporter involved in the basal level of azole susceptibility. Confers resistance to fluconazole, itraconazole and voriconazole. The polypeptide is ABC multidrug transporter atrI (Aspergillus fumigatus (strain ATCC MYA-4609 / CBS 101355 / FGSC A1100 / Af293) (Neosartorya fumigata)).